Consider the following 338-residue polypeptide: 1-aminocyclopropane-1-carboxylate deaminase (338 aa).

Lys51 carries the post-translational modification N6-(pyridoxal phosphate)lysine. The active-site Nucleophile is the Ser78.

This sequence belongs to the ACC deaminase/D-cysteine desulfhydrase family. In terms of assembly, homotrimer. Requires pyridoxal 5'-phosphate as cofactor.

It catalyses the reaction 1-aminocyclopropane-1-carboxylate + H2O = 2-oxobutanoate + NH4(+). Its function is as follows. Catalyzes a cyclopropane ring-opening reaction, the irreversible conversion of 1-aminocyclopropane-1-carboxylate (ACC) to ammonia and alpha-ketobutyrate. Allows growth on ACC as a nitrogen source. This is 1-aminocyclopropane-1-carboxylate deaminase from Ralstonia nicotianae (strain ATCC BAA-1114 / GMI1000) (Ralstonia solanacearum).